Here is a 156-residue protein sequence, read N- to C-terminus: Cyanate hydratase (156 aa).

Active-site residues include Arg-96, Glu-99, and Ser-122.

The protein belongs to the cyanase family.

The enzyme catalyses cyanate + hydrogencarbonate + 3 H(+) = NH4(+) + 2 CO2. Catalyzes the reaction of cyanate with bicarbonate to produce ammonia and carbon dioxide. In Burkholderia lata (strain ATCC 17760 / DSM 23089 / LMG 22485 / NCIMB 9086 / R18194 / 383), this protein is Cyanate hydratase.